The sequence spans 358 residues: Protein phosphatase 1 regulatory subunit 3G (358 aa).

The interval 1 to 71 is disordered; that stretch reads MEPIGARLSL…KEEAAPQEQE (71 aa). Positions 11–29 are enriched in low complexity; sequence EAPGPAPFREAPPAEELPA. A Phosphoserine modification is found at Ser86. Residues 210 to 350 enclose the CBM21 domain; it reads AERLQRQRVC…NNAGANYTLR (141 aa). Positions 270 to 280 are enriched in low complexity; sequence EPLEPQQPEAP. Positions 270 to 295 are disordered; sequence EPLEPQQPEAPSGASEPGSGDAKKEP.

Its function is as follows. Glycogen-targeting subunit for protein phosphatase 1 (PP1). Involved in the regulation of hepatic glycogenesis in a manner coupled to the fasting-feeding cycle and distinct from other glycogen-targeting subunits. This Homo sapiens (Human) protein is Protein phosphatase 1 regulatory subunit 3G (PPP1R3G).